Here is a 732-residue protein sequence, read N- to C-terminus: B-cadherin (732 aa).

A propeptide spanning residues leucine 1–arginine 6 is cleaved from the precursor. Cadherin domains follow at residues arginine 6–phenylalanine 114, threonine 115–phenylalanine 227, aspartate 228–phenylalanine 339, aspartate 340–histidine 443, and glycine 444–threonine 554. Topologically, residues arginine 6–threonine 554 are extracellular. Asparagine 137 carries N-linked (GlcNAc...) asparagine glycosylation. N-linked (GlcNAc...) asparagine glycosylation is present at asparagine 410. A helical membrane pass occupies residues glycine 555–valine 580. The Cytoplasmic segment spans residues arginine 581 to glutamate 732.

Expressed in a wide variety of tissues.

The protein resides in the cell membrane. In terms of biological role, cadherins are calcium-dependent cell adhesion proteins. They preferentially interact with themselves in a homophilic manner in connecting cells; cadherins may thus contribute to the sorting of heterogeneous cell types. B-cadherin may have important functions in neurogenesis, in at least some epithelia, and in embryogenesis. The protein is B-cadherin (K-CAM) of Gallus gallus (Chicken).